The following is a 61-amino-acid chain: Large ribosomal subunit protein bL28 (61 aa).

The protein belongs to the bacterial ribosomal protein bL28 family.

In Nautilia profundicola (strain ATCC BAA-1463 / DSM 18972 / AmH), this protein is Large ribosomal subunit protein bL28.